A 139-amino-acid chain; its full sequence is Large-conductance mechanosensitive channel (139 aa).

The next 3 helical transmembrane spans lie at 16-36 (VIDL…VKAL), 40-60 (IVMP…LAWV), and 79-99 (GAFI…FMLV).

Belongs to the MscL family. Homopentamer.

The protein resides in the cell inner membrane. In terms of biological role, channel that opens in response to stretch forces in the membrane lipid bilayer. May participate in the regulation of osmotic pressure changes within the cell. In Phenylobacterium zucineum (strain HLK1), this protein is Large-conductance mechanosensitive channel.